Here is a 1861-residue protein sequence, read N- to C-terminus: Polyketide synthase 2 (1861 aa).

The region spanning 109 to 525 is the Ketosynthase family 3 (KS3) domain; it reads DSKIAIIGMS…GGNSALLLED (417 aa). Active-site for beta-ketoacyl synthase activity residues include C264, H399, and H441. Residues 626-931 are malonyl-CoA:ACP transacylase (MAT) domain; the sequence is GFVFSGQGAQ…PSLHRKDDGW (306 aa). Catalysis depends on S716, which acts as the For acyl/malonyl transferase activity. A product template (PT) domain region spans residues 1008–1312; the sequence is TSSVQKVIQQ…VFGGMTVLPP (305 aa). The tract at residues 1012–1146 is N-terminal hotdog fold; sequence QKVIQQTDGP…CILRFADPKS (135 aa). Residues 1012–1318 enclose the PKS/mFAS DH domain; it reads QKVIQQTDGP…VLPPRRGADA (307 aa). The Proton acceptor; for dehydratase activity role is filled by H1045. The segment at 1174-1318 is C-terminal hotdog fold; sequence DSLLSKGIVY…VLPPRRGADA (145 aa). Residue D1232 is the Proton donor; for dehydratase activity of the active site. The region spanning 1356-1433 is the Carrier 1 domain; that stretch reads SPQSGAIHRI…ELRLFLAADQ (78 aa). S1393 bears the O-(pantetheine 4'-phosphoryl)serine mark. The tract at residues 1441–1470 is disordered; the sequence is CESSNGQHTPQTSDKGSGTLTAQKPDHDTD. Residues 1442 to 1462 are compositionally biased toward polar residues; sequence ESSNGQHTPQTSDKGSGTLTA. In terms of domain architecture, Carrier 2 spans 1472–1546; it reads EMTLNRVCAI…SLQKTLRGTE (75 aa). An O-(pantetheine 4'-phosphoryl)serine modification is found at S1506. Positions 1582 to 1855 are thioesterase (TE) domain; that stretch reads ASAPHATSIL…IIEMSNLIGD (274 aa). Catalysis depends on S1685, which acts as the For thioesterase activity.

Functionally, polyketide synthase; part of the Pks2 gene cluster that mediates the formation of infectious structures (appressoria), enabling these fungi to kill insects faster. The product of the Pks2 gene cluster is different from the one of Pks1 and has still not been identified. This is Polyketide synthase 2 from Metarhizium acridum (strain CQMa 102).